A 131-amino-acid chain; its full sequence is MRHYEIVFMVHPDQSEQVPGMIERYSAAITGAEGKIHRLEDWGRRQLAYPINKLHKAHYVLMNVEAPQEVIDELETTFRFNDAVIRSMIMRTKHAVTEASPMVKAKDERRERRDDFANETADDAEAGDSEE.

The disordered stretch occupies residues 96-131; sequence VTEASPMVKAKDERRERRDDFANETADDAEAGDSEE. Residues 104-116 are compositionally biased toward basic and acidic residues; it reads KAKDERRERRDDF. Acidic residues predominate over residues 120 to 131; that stretch reads TADDAEAGDSEE.

Belongs to the bacterial ribosomal protein bS6 family.

Functionally, binds together with bS18 to 16S ribosomal RNA. In Salmonella arizonae (strain ATCC BAA-731 / CDC346-86 / RSK2980), this protein is Small ribosomal subunit protein bS6.